Consider the following 365-residue polypeptide: WAT1-related protein At4g01440 (365 aa).

Helical transmembrane passes span W8–V28, V40–W60, I72–L92, T101–F121, A132–M152, W181–I201, Y213–I233, I249–W269, I277–I297, and I302–L322. EamA domains follow at residues N25 to I144 and G196 to L321.

The protein belongs to the drug/metabolite transporter (DMT) superfamily. Plant drug/metabolite exporter (P-DME) (TC 2.A.7.4) family.

The protein resides in the membrane. The chain is WAT1-related protein At4g01440 from Arabidopsis thaliana (Mouse-ear cress).